Here is a 116-residue protein sequence, read N- to C-terminus: Tachykinin-3 (116 aa).

Residues 1 to 20 form the signal peptide; it reads MRSAMLFAAVLALSLAWTFG. The propeptide occupies 21 to 79; sequence AACEEPQEQGGRLSKDSDLSLLPPPLLRRLYDSRSISLEGLLKVLSKASVGPKETSLPQ. Met91 bears the Methionine amide mark. The interval 92 to 116 is disordered; sequence GKRNSQPDTPADVVEENTPSFGVLK. The propeptide occupies 95 to 116; it reads NSQPDTPADVVEENTPSFGVLK.

It belongs to the tachykinin family.

The protein resides in the secreted. Functionally, tachykinins are active peptides which excite neurons, evoke behavioral responses, are potent vasodilators and secretagogues, and contract (directly or indirectly) many smooth muscles. Is a critical central regulator of gonadal function. This is Tachykinin-3 (Tac3) from Rattus norvegicus (Rat).